A 227-amino-acid chain; its full sequence is Lipoprotein-releasing system ATP-binding protein LolD (227 aa).

The ABC transporter domain occupies 8–226; it reads IEVTNLCKSF…VVHMADGRIT (219 aa). Residue 44–51 coordinates ATP; the sequence is GASGAGKT.

Belongs to the ABC transporter superfamily. Lipoprotein translocase (TC 3.A.1.125) family. As to quaternary structure, the complex is composed of two ATP-binding proteins (LolD) and two transmembrane proteins (LolC and LolE).

It localises to the cell inner membrane. Its function is as follows. Part of the ABC transporter complex LolCDE involved in the translocation of mature outer membrane-directed lipoproteins, from the inner membrane to the periplasmic chaperone, LolA. Responsible for the formation of the LolA-lipoprotein complex in an ATP-dependent manner. The polypeptide is Lipoprotein-releasing system ATP-binding protein LolD (Syntrophotalea carbinolica (strain DSM 2380 / NBRC 103641 / GraBd1) (Pelobacter carbinolicus)).